We begin with the raw amino-acid sequence, 110 residues long: Probable ribonuclease HepT (110 aa).

Residues Arg-75 and His-80 contribute to the active site. The RX(4)HXY motif motif lies at 75–82; sequence RDKLIHAY. Tyr-82 carries the post-translational modification O-di-AMP-tyrosine.

It belongs to the HepT RNase toxin family. Post-translationally, modified by cognate antitoxin MntA; probably at least 2 successive AMPylation events occur on Tyr-82.

In terms of biological role, toxic component of a type VII toxin-antitoxin (TA) system. Overexpression in E.coli inhibits cell growth. Neutralized by cognate antitoxin MntA. Neutralization is probably due to AMPylation by MntA. Probably an RNAase. In Thermococcus cleftensis (strain DSM 27260 / KACC 17922 / CL1), this protein is Probable ribonuclease HepT.